The following is a 215-amino-acid chain: Pyrrolidone-carboxylate peptidase (215 aa).

Residues E78, C141, and H165 contribute to the active site.

Belongs to the peptidase C15 family. As to quaternary structure, homotetramer.

It localises to the cytoplasm. It carries out the reaction Release of an N-terminal pyroglutamyl group from a polypeptide, the second amino acid generally not being Pro.. Functionally, removes 5-oxoproline from various penultimate amino acid residues except L-proline. The chain is Pyrrolidone-carboxylate peptidase from Streptococcus pyogenes serotype M12 (strain MGAS2096).